The primary structure comprises 323 residues: Aspartate carbamoyltransferase catalytic subunit (323 aa).

Carbamoyl phosphate-binding residues include R71 and T72. Position 99 (K99) interacts with L-aspartate. Residues R121, H151, and Q154 each coordinate carbamoyl phosphate. The L-aspartate site is built by R184 and R239. Carbamoyl phosphate-binding residues include G280 and P281.

It belongs to the aspartate/ornithine carbamoyltransferase superfamily. ATCase family. As to quaternary structure, heterododecamer (2C3:3R2) of six catalytic PyrB chains organized as two trimers (C3), and six regulatory PyrI chains organized as three dimers (R2).

It carries out the reaction carbamoyl phosphate + L-aspartate = N-carbamoyl-L-aspartate + phosphate + H(+). The protein operates within pyrimidine metabolism; UMP biosynthesis via de novo pathway; (S)-dihydroorotate from bicarbonate: step 2/3. In terms of biological role, catalyzes the condensation of carbamoyl phosphate and aspartate to form carbamoyl aspartate and inorganic phosphate, the committed step in the de novo pyrimidine nucleotide biosynthesis pathway. In Cupriavidus taiwanensis (strain DSM 17343 / BCRC 17206 / CCUG 44338 / CIP 107171 / LMG 19424 / R1) (Ralstonia taiwanensis (strain LMG 19424)), this protein is Aspartate carbamoyltransferase catalytic subunit.